We begin with the raw amino-acid sequence, 325 residues long: Zinc finger C2HC domain-containing protein 1A (325 aa).

The segment at 15-44 (ELLPCKICGRTFFPVALKKHGPICQKTATK) adopts a C2HC/C3H-type 1 zinc-finger fold. Residues Cys19, Cys22, His34, and Cys38 each contribute to the Zn(2+) site. The segment at 43-83 (TKKRKTFDSSRQRAEGTDIPTVKPLKPRPEPPKKPSNWRRK) is disordered. A compositionally biased stretch (basic and acidic residues) spans 48 to 58 (TFDSSRQRAEG). Residues 118 to 147 (DYIQCPYCQRRFNENAADRHINFCKEQAAR) form a C2HC/C3H-type 2 zinc finger. Zn(2+) is bound by residues Cys122, Cys125, His137, and Cys141. Positions 150-260 (NKGKFSTDTK…NPAPGVLTNK (111 aa)) are disordered. Composition is skewed to low complexity over residues 177–188 (SNSPGTASSGSS) and 197–216 (GKTVVGVPSGKVSSSSSSLG). Ser223 carries the post-translational modification Phosphoserine. Thr244 carries the phosphothreonine modification. The residue at position 292 (Ser292) is a Phosphoserine.

The protein belongs to the ZC2HC1 family. Zn(2+) is required as a cofactor.

In Homo sapiens (Human), this protein is Zinc finger C2HC domain-containing protein 1A (ZC2HC1A).